The following is a 1464-amino-acid chain: ABC transporter G family member 35 (1464 aa).

A disordered region spans residues 1 to 26 (MDAAAEMQKVVSLRRGGGGSSSRGAA). The ABC transporter 1 domain maps to 173 to 446 (ANALGILPNK…FELMGFKCPE (274 aa)). 206 to 213 (GPPGSGKT) is an ATP binding site. The 214-residue stretch at 524-737 (ELLKANIDRE…AQNAISVNEF (214 aa)) folds into the ABC transmembrane type-2 1 domain. Helical transmembrane passes span 542–562 (FVYI…MTVF), 575–595 (GVIF…NGLS), 630–650 (IPMS…VIGF), 662–682 (LLML…GGAA), 686–706 (IVAN…GGFI), 715–735 (WWIW…ISVN), and 774–794 (IGFG…TLAL). An ABC transporter 2 domain is found at 867 to 1119 (LTFDNIKYSV…ELIKYFEGIK (253 aa)). Position 912–919 (912–919 (GVSGAGKT)) interacts with ATP. The region spanning 1192 to 1406 (NQCLACLWKM…TLYGLVASQF (215 aa)) is the ABC transmembrane type-2 2 domain. Helical transmembrane passes span 1213 to 1233 (AIRL…FWDL), 1243 to 1263 (LFNA…LNSQ), 1299 to 1319 (FPYT…MIGF), 1326 to 1346 (FFWY…YGMM), 1356 to 1376 (VASI…GFII), 1387 to 1407 (WYCW…SQFG), and 1436 to 1456 (VVAV…GFAI).

Belongs to the ABC transporter superfamily. ABCG family. PDR (TC 3.A.1.205) subfamily.

Its subcellular location is the membrane. Functionally, may be a general defense protein. This Oryza sativa subsp. japonica (Rice) protein is ABC transporter G family member 35.